We begin with the raw amino-acid sequence, 142 residues long: Large ribosomal subunit protein uL13 (142 aa).

The protein belongs to the universal ribosomal protein uL13 family. Part of the 50S ribosomal subunit.

Its function is as follows. This protein is one of the early assembly proteins of the 50S ribosomal subunit, although it is not seen to bind rRNA by itself. It is important during the early stages of 50S assembly. This Caldicellulosiruptor bescii (strain ATCC BAA-1888 / DSM 6725 / KCTC 15123 / Z-1320) (Anaerocellum thermophilum) protein is Large ribosomal subunit protein uL13.